Reading from the N-terminus, the 359-residue chain is Peptide chain release factor 1 (359 aa).

Gln236 is modified (N5-methylglutamine).

Belongs to the prokaryotic/mitochondrial release factor family. Methylated by PrmC. Methylation increases the termination efficiency of RF1.

Its subcellular location is the cytoplasm. In terms of biological role, peptide chain release factor 1 directs the termination of translation in response to the peptide chain termination codons UAG and UAA. This is Peptide chain release factor 1 from Streptococcus mutans serotype c (strain ATCC 700610 / UA159).